The sequence spans 488 residues: RuvB-like helicase 1 (488 aa).

Positions 1-11 (MATANTSSGSM) are enriched in polar residues. The disordered stretch occupies residues 1 to 29 (MATANTSSGSMNGVGPVTMDSSTSGASRE). Position 87–94 (87–94 (GGPGTGKT)) interacts with ATP.

The protein belongs to the RuvB family. May form heterododecamers with RVB2. Component of the SWR1 chromatin remodeling complex, the INO80 chromatin remodeling complex, and of the R2TP complex.

The protein resides in the nucleus. It carries out the reaction ATP + H2O = ADP + phosphate + H(+). Its function is as follows. DNA helicase which participates in several chromatin remodeling complexes, including the SWR1 and the INO80 complexes. The SWR1 complex mediates the ATP-dependent exchange of histone H2A for the H2A variant HZT1 leading to transcriptional regulation of selected genes by chromatin remodeling. The INO80 complex remodels chromatin by shifting nucleosomes and is involved in DNA repair. Also involved in pre-rRNA processing. This chain is RuvB-like helicase 1 (RVB1), found in Mycosarcoma maydis (Corn smut fungus).